The chain runs to 133 residues: Transmembrane protein 60 (133 aa).

Transmembrane regions (helical) follow at residues 5-25 (LAQR…MLVL), 35-55 (WFLI…LLIV), 78-98 (AWYL…CAKL), and 110-130 (FIPL…NVFF).

It localises to the membrane. This Homo sapiens (Human) protein is Transmembrane protein 60 (TMEM60).